A 354-amino-acid polypeptide reads, in one-letter code: NADH-quinone oxidoreductase subunit H 2 (354 aa).

The next 8 helical transmembrane spans lie at 4–24 (IALFLLVALIKVVLVIFVLLT), 81–101 (ILAPMLAVAMALLSISIVPFG), 130–150 (IGLLIILGVTSIGVYGIALAG), 170–190 (VSYEVSLGLSLVGVLLLSGSF), 201–221 (GGFWNWNIFGGFQFIAFFIYL), 269–289 (VACIASILFLGGWSGPVPGFL), 296–316 (LVPVFWFCLRIFAFLFIYIWV), and 333–353 (WKFLLPLSIANIMVTALFVAL).

It belongs to the complex I subunit 1 family. In terms of assembly, NDH-1 is composed of 14 different subunits. Subunits NuoA, H, J, K, L, M, N constitute the membrane sector of the complex.

It localises to the cell inner membrane. It carries out the reaction a quinone + NADH + 5 H(+)(in) = a quinol + NAD(+) + 4 H(+)(out). Its function is as follows. NDH-1 shuttles electrons from NADH, via FMN and iron-sulfur (Fe-S) centers, to quinones in the respiratory chain. The immediate electron acceptor for the enzyme in this species is believed to be ubiquinone. Couples the redox reaction to proton translocation (for every two electrons transferred, four hydrogen ions are translocated across the cytoplasmic membrane), and thus conserves the redox energy in a proton gradient. This subunit may bind ubiquinone. This is NADH-quinone oxidoreductase subunit H 2 from Koribacter versatilis (strain Ellin345).